We begin with the raw amino-acid sequence, 243 residues long: Type III pantothenate kinase (243 aa).

Position 6–13 (Asp6–Lys13) interacts with ATP. Gly101–Ile104 is a substrate binding site. Asp103 acts as the Proton acceptor in catalysis. Position 125 (Thr125) interacts with ATP. Residue Thr176 participates in substrate binding.

It belongs to the type III pantothenate kinase family. As to quaternary structure, homodimer. NH4(+) is required as a cofactor. Requires K(+) as cofactor.

It localises to the cytoplasm. The catalysed reaction is (R)-pantothenate + ATP = (R)-4'-phosphopantothenate + ADP + H(+). The protein operates within cofactor biosynthesis; coenzyme A biosynthesis; CoA from (R)-pantothenate: step 1/5. In terms of biological role, catalyzes the phosphorylation of pantothenate (Pan), the first step in CoA biosynthesis. The protein is Type III pantothenate kinase of Mycoplasma mobile (strain ATCC 43663 / 163K / NCTC 11711) (Mesomycoplasma mobile).